The following is a 100-amino-acid chain: Small ribosomal subunit protein uS14c (100 aa).

It belongs to the universal ribosomal protein uS14 family. In terms of assembly, part of the 30S ribosomal subunit.

It localises to the plastid. Its subcellular location is the chloroplast. Binds 16S rRNA, required for the assembly of 30S particles. The protein is Small ribosomal subunit protein uS14c of Psilotum nudum (Whisk fern).